Reading from the N-terminus, the 451-residue chain is Porin AaxA (451 aa).

The N-terminal stretch at 1-27 is a signal peptide; sequence MASFHSSLLTALCTLCTYGILTMPAYG.

This sequence belongs to the OprB family.

It localises to the cell outer membrane. In terms of biological role, facilitates L-arginine uptake, as part of the AaxABC system. The arginine uptake by the bacterium in the macrophage may be a virulence factor against the host innate immune response. This Chlamydia caviae (strain ATCC VR-813 / DSM 19441 / 03DC25 / GPIC) (Chlamydophila caviae) protein is Porin AaxA (aaxA).